The following is a 63-amino-acid chain: Phylloseptin-Az1 (63 aa).

Residues 1 to 19 form the signal peptide; it reads LKKSLFLVVFLGLATLSIC. The propeptide occupies 20 to 41; the sequence is EEEKRETEEEEYNQGEDDKSEE. Phe62 bears the Phenylalanine amide mark.

Expressed by the skin glands.

Its subcellular location is the secreted. Functionally, has antimicrobial activity. The polypeptide is Phylloseptin-Az1 (Pithecopus azureus (Orange-legged monkey tree frog)).